A 430-amino-acid chain; its full sequence is tRNA(Ile)-lysidine synthase (430 aa).

An ATP-binding site is contributed by 24 to 29; the sequence is SGGLDS.

Belongs to the tRNA(Ile)-lysidine synthase family.

The protein localises to the cytoplasm. It catalyses the reaction cytidine(34) in tRNA(Ile2) + L-lysine + ATP = lysidine(34) in tRNA(Ile2) + AMP + diphosphate + H(+). Ligates lysine onto the cytidine present at position 34 of the AUA codon-specific tRNA(Ile) that contains the anticodon CAU, in an ATP-dependent manner. Cytidine is converted to lysidine, thus changing the amino acid specificity of the tRNA from methionine to isoleucine. This is tRNA(Ile)-lysidine synthase from Haemophilus influenzae (strain ATCC 51907 / DSM 11121 / KW20 / Rd).